The sequence spans 318 residues: DNA polymerase IV (318 aa).

The 181-residue stretch at 6 to 186 folds into the UmuC domain; that stretch reads IIHIDMDAFY…LPLGKIPGVG (181 aa). Asp10 and Asp104 together coordinate Mg(2+). Glu105 is an active-site residue.

It belongs to the DNA polymerase type-Y family. Monomer. The cofactor is Mg(2+).

It is found in the cytoplasm. The catalysed reaction is DNA(n) + a 2'-deoxyribonucleoside 5'-triphosphate = DNA(n+1) + diphosphate. Its function is as follows. Poorly processive, error-prone DNA polymerase involved in untargeted mutagenesis. Copies undamaged DNA at stalled replication forks, which arise in vivo from mismatched or misaligned primer ends. These misaligned primers can be extended by PolIV. Exhibits no 3'-5' exonuclease (proofreading) activity. May be involved in translesional synthesis, in conjunction with the beta clamp from PolIII. This Neisseria meningitidis serogroup B (strain ATCC BAA-335 / MC58) protein is DNA polymerase IV.